The following is a 269-amino-acid chain: Tryptophan synthase alpha chain (269 aa).

Catalysis depends on proton acceptor residues Glu-49 and Asp-60.

This sequence belongs to the TrpA family. In terms of assembly, tetramer of two alpha and two beta chains.

The enzyme catalyses (1S,2R)-1-C-(indol-3-yl)glycerol 3-phosphate + L-serine = D-glyceraldehyde 3-phosphate + L-tryptophan + H2O. Its pathway is amino-acid biosynthesis; L-tryptophan biosynthesis; L-tryptophan from chorismate: step 5/5. Functionally, the alpha subunit is responsible for the aldol cleavage of indoleglycerol phosphate to indole and glyceraldehyde 3-phosphate. This Acidovorax sp. (strain JS42) protein is Tryptophan synthase alpha chain.